The primary structure comprises 357 residues: Heat-inducible transcription repressor HrcA (357 aa).

The protein belongs to the HrcA family.

Negative regulator of class I heat shock genes (grpE-dnaK-dnaJ and groELS operons). Prevents heat-shock induction of these operons. The protein is Heat-inducible transcription repressor HrcA of Chlorobium luteolum (strain DSM 273 / BCRC 81028 / 2530) (Pelodictyon luteolum).